Reading from the N-terminus, the 55-residue chain is Ferredoxin (55 aa).

4Fe-4S ferredoxin-type domains lie at 2–27 (HIIT…HEGT) and 28–55 (GKYE…VKAE). [4Fe-4S] cluster contacts are provided by Cys8, Cys11, Cys14, Cys18, Cys37, Cys40, Cys43, and Cys47.

The cofactor is [4Fe-4S] cluster.

Functionally, ferredoxins are iron-sulfur proteins that transfer electrons in a wide variety of metabolic reactions. The sequence is that of Ferredoxin from Thermoanaerobacterium thermosaccharolyticum (Clostridium thermosaccharolyticum).